Here is a 363-residue protein sequence, read N- to C-terminus: GDSL esterase/lipase At2g24560 (363 aa).

An N-terminal signal peptide occupies residues 1-22 (MSTSKTITFTLFIAALLSSCDA). N-linked (GlcNAc...) asparagine glycosylation is present at N25. S41 functions as the Nucleophile in the catalytic mechanism. 2 N-linked (GlcNAc...) asparagine glycosylation sites follow: N103 and N325. Residues D333 and H336 contribute to the active site.

This sequence belongs to the 'GDSL' lipolytic enzyme family.

It localises to the secreted. In Arabidopsis thaliana (Mouse-ear cress), this protein is GDSL esterase/lipase At2g24560.